Here is a 105-residue protein sequence, read N- to C-terminus: Protein yippee-like At4g27740 (105 aa).

Residues 8–105 (PTYFCRNCEN…IEKLKLTKRY (98 aa)) form the Yippee domain. Positions 12, 15, 68, and 71 each coordinate Zn(2+).

Belongs to the yippee family.

The sequence is that of Protein yippee-like At4g27740 from Arabidopsis thaliana (Mouse-ear cress).